A 91-amino-acid polypeptide reads, in one-letter code: Putative ribonuclease inhibitor YrdF (91 aa).

This sequence belongs to the barstar family.

The protein localises to the cytoplasm. This chain is Putative ribonuclease inhibitor YrdF (yrdF), found in Bacillus subtilis (strain 168).